Consider the following 342-residue polypeptide: Renalase (342 aa).

An N-terminal signal peptide occupies residues 1-17; sequence MSRVLVVGAGLTGSLCA. FAD is bound by residues Thr-12, Arg-42, and 61 to 62; that span reads QY.

The protein belongs to the renalase family. FAD serves as cofactor. In terms of tissue distribution, expressed predominantly in kidney and testis with lower levels in liver, heart and embryo and weak expression in brain and skeletal muscle.

The protein localises to the secreted. It carries out the reaction 1,2-dihydro-beta-NAD + O2 + H(+) = H2O2 + NAD(+). The enzyme catalyses 1,2-dihydro-beta-NADP + O2 + H(+) = H2O2 + NADP(+). The catalysed reaction is 1,6-dihydro-beta-NADP + O2 + H(+) = H2O2 + NADP(+). It catalyses the reaction 1,6-dihydro-beta-NAD + O2 + H(+) = H2O2 + NAD(+). Catalyzes the oxidation of the less abundant 1,2-dihydro-beta-NAD(P) and 1,6-dihydro-beta-NAD(P) to form beta-NAD(P)(+). The enzyme hormone is secreted by the kidney, and circulates in blood and modulates cardiac function and systemic blood pressure. Lowers blood pressure in vivo by decreasing cardiac contractility and heart rate and preventing a compensatory increase in peripheral vascular tone, suggesting a causal link to the increased plasma catecholamine and heightened cardiovascular risk. High concentrations of catecholamines activate plasma renalase and promotes its secretion and synthesis. The polypeptide is Renalase (Mus musculus (Mouse)).